A 381-amino-acid polypeptide reads, in one-letter code: tRNA-cytidine(32) 2-sulfurtransferase (381 aa).

Positions 101-106 (SGGKDS) match the PP-loop motif motif. The [4Fe-4S] cluster site is built by Cys176, Cys179, and Cys267.

This sequence belongs to the TtcA family. Homodimer. Mg(2+) serves as cofactor. It depends on [4Fe-4S] cluster as a cofactor.

The protein localises to the cytoplasm. The catalysed reaction is cytidine(32) in tRNA + S-sulfanyl-L-cysteinyl-[cysteine desulfurase] + AH2 + ATP = 2-thiocytidine(32) in tRNA + L-cysteinyl-[cysteine desulfurase] + A + AMP + diphosphate + H(+). It functions in the pathway tRNA modification. Its function is as follows. Catalyzes the ATP-dependent 2-thiolation of cytidine in position 32 of tRNA, to form 2-thiocytidine (s(2)C32). The sulfur atoms are provided by the cysteine/cysteine desulfurase (IscS) system. The protein is tRNA-cytidine(32) 2-sulfurtransferase of Psychrobacter arcticus (strain DSM 17307 / VKM B-2377 / 273-4).